The sequence spans 215 residues: Fanconi anemia core complex-associated protein 24 (215 aa).

Residues 160-215 (LRTVQQIPGVGKVKAPLLLQKFPSIQQLSNASIGELEQVVGQAVAQQIHAFFTQPR) form a ruvA domain 2-like region.

In terms of assembly, belongs to the multisubunit FA complex composed of FANCA, FANCB, FANCC, FANCE, FANCF, FANCG, FANCL/PHF9, FANCM and FAAP24. Interacts with FANCM.

It is found in the nucleus. Its function is as follows. Plays a role in DNA repair through recruitment of the FA core complex to damaged DNA. Regulates FANCD2 monoubiquitination upon DNA damage. Induces chromosomal instability as well as hypersensitivity to DNA cross-linking agents, when repressed. Targets FANCM/FAAP24 complex to the DNA, preferentially to single strand DNA. The sequence is that of Fanconi anemia core complex-associated protein 24 from Homo sapiens (Human).